An 852-amino-acid polypeptide reads, in one-letter code: DNA mismatch repair protein MutS (852 aa).

ATP is bound at residue 602-609; that stretch reads GPNMSGKS.

It belongs to the DNA mismatch repair MutS family.

Functionally, this protein is involved in the repair of mismatches in DNA. It is possible that it carries out the mismatch recognition step. This protein has a weak ATPase activity. In Streptococcus thermophilus (strain CNRZ 1066), this protein is DNA mismatch repair protein MutS.